The sequence spans 433 residues: Phosphomethylpyrimidine synthase (433 aa).

Substrate contacts are provided by residues asparagine 68, methionine 97, tyrosine 126, histidine 162, 184–186, 225–228, and glutamate 264; these read SRG and DALR. Histidine 268 contributes to the Zn(2+) binding site. A substrate-binding site is contributed by tyrosine 291. Histidine 332 is a Zn(2+) binding site. [4Fe-4S] cluster is bound by residues cysteine 408, cysteine 411, and cysteine 415.

It belongs to the ThiC family. It depends on [4Fe-4S] cluster as a cofactor.

The enzyme catalyses 5-amino-1-(5-phospho-beta-D-ribosyl)imidazole + S-adenosyl-L-methionine = 4-amino-2-methyl-5-(phosphooxymethyl)pyrimidine + CO + 5'-deoxyadenosine + formate + L-methionine + 3 H(+). It functions in the pathway cofactor biosynthesis; thiamine diphosphate biosynthesis. Catalyzes the synthesis of the hydroxymethylpyrimidine phosphate (HMP-P) moiety of thiamine from aminoimidazole ribotide (AIR) in a radical S-adenosyl-L-methionine (SAM)-dependent reaction. The protein is Phosphomethylpyrimidine synthase of Fusobacterium nucleatum subsp. nucleatum (strain ATCC 25586 / DSM 15643 / BCRC 10681 / CIP 101130 / JCM 8532 / KCTC 2640 / LMG 13131 / VPI 4355).